We begin with the raw amino-acid sequence, 201 residues long: Recombination protein RecR (201 aa).

The segment at 57-72 (CADCRTFTEQDICTIC) adopts a C4-type zinc-finger fold. The region spanning 81–176 (GQICVVESPA…VASRIAHGVP (96 aa)) is the Toprim domain.

The protein belongs to the RecR family.

In terms of biological role, may play a role in DNA repair. It seems to be involved in an RecBC-independent recombinational process of DNA repair. It may act with RecF and RecO. The protein is Recombination protein RecR of Serratia proteamaculans (strain 568).